We begin with the raw amino-acid sequence, 2258 residues long: Probable serine/threonine-protein kinase ifkA (2258 aa).

Disordered stretches follow at residues Arg-43 to Gly-108 and Glu-189 to Asp-308. A compositionally biased stretch (low complexity) spans Asn-45–Asn-57. Positions Asn-58–Asp-100 are enriched in acidic residues. Low complexity predominate over residues Asn-191 to Asn-301. A coiled-coil region spans residues Asn-273–Leu-309. Positions Trp-319–Leu-691 constitute a Protein kinase 1 domain. Residues Ile-325–Val-333 and Lys-348 each bind ATP. A disordered region spans residues Ser-358–Asn-398. The span at Ser-359 to Asn-398 shows a compositional bias: low complexity. The active-site Proton acceptor is the Asp-498. 2 disordered regions span residues Lys-741–Asn-768 and Pro-782–Leu-870. A compositionally biased stretch (low complexity) spans Asn-746–Asn-768. Residues Pro-782–Asn-791 are compositionally biased toward polar residues. Over residues Thr-793 to Ser-805 the composition is skewed to pro residues. The span at Pro-841 to Leu-870 shows a compositional bias: low complexity. The Protein kinase 2 domain occupies Phe-894 to Leu-1482. ATP is bound by residues Ile-900–Val-908 and Lys-923. Positions Thr-1053–Asn-1094 are enriched in low complexity. The segment at Thr-1053–Glu-1259 is disordered. The span at Lys-1095–Lys-1106 shows a compositional bias: basic residues. A compositionally biased stretch (low complexity) spans Asn-1156–Gly-1185. Acidic residues predominate over residues Asp-1206–Asp-1233. Residues Ser-1242–Ser-1251 show a composition bias toward low complexity. Asp-1313 (proton acceptor) is an active-site residue. Disordered stretches follow at residues Lys-1343–Gln-1370 and Gly-2048–Ser-2104. Residues Leu-1347 to Ala-1368 are compositionally biased toward low complexity. The span at Gly-2048–Asn-2072 shows a compositional bias: gly residues. The segment covering Ser-2085–Asn-2099 has biased composition (low complexity).

The protein belongs to the protein kinase superfamily. Ser/Thr protein kinase family.

It catalyses the reaction L-seryl-[protein] + ATP = O-phospho-L-seryl-[protein] + ADP + H(+). It carries out the reaction L-threonyl-[protein] + ATP = O-phospho-L-threonyl-[protein] + ADP + H(+). In terms of biological role, phosphorylates eIF2-alpha, from 1 to 7 hours after the onset of development or during the preaggregation state, resulting in a shift from polysomes to free ribosomes for bulk mRNA. In Dictyostelium discoideum (Social amoeba), this protein is Probable serine/threonine-protein kinase ifkA (ifkA).